The chain runs to 4743 residues: MGPQRPALRAPLLLLFLLLFLDTSVWAQDATRFKHLRKYVYSYEAESSSGVRGTADSRSATKINCKVELEVPQVCTLIMRTSQCTLKEVYGFNPEGKALMKKTKNSEEFASAMSRYELKLAFPEGKRVALYPDLGEPNYILNIKRGIISALLVPPETEEDKQVLFQDTVYGNCSTQVTVNSRKGTVATEMSTERNLQHCDGFQPISTSVSPLALIKGLVRPLSTLISSSQSCQYTLEPKRKHVSEAICNEQHLFLPFSYKNKYGIMTHVTQKLSLEDTPKINSRFFRGGINQVGLAFESTKSTSPPKQADAVLKTLQELKKLSISEQNAQRANLFHKLVTELRGLSGEAITSLLPQLIEVSSPITLQALIQCGQPECYTHILQWLKTEKAHPLLIDIVTYLMALIPNPSVQRLQEIFNTAKELQSRATLYALSHAVNSYYAIMDHSRSPVLEDIAGYLMKQIDNECMGDEDRTFLILRVIGNMGRTMERVMPALKSSVLNCVRSTKPSLQIQKAALQALRKMEMGDEVRTILFDTFVNDVAPVEKRLAAYLLLMRSPSSSDINKIAKLLQWEQSEQVKNFVASHIANILNSEELYVQDLKNLIKNALVNSRLPTIMDFRKFSRNYQISKSVSIPLFDPVSAKIEGNLVFDPSSYLPKESMLKTTLTVFGIASLDLFEIGLEGKGFEPTLEALFGKQGFFPDSVNKALYWVNGQVPDRVSKVLVDHFGYTKDDKHEQDMVNGIMPIVDKLIKELKSKEIPEARAYLRILGKELGFVRLQDLQVLGKLLLNGAQTFRGVPQMIVQAIREGSKDDLFLHYIFMENAFELPTGVGLQLQVSSSGVFTPGIKAGVRLELANIQAELVAKPSVSLEFVTNMGIIIPDFAKSGVQMNTNFFHESGLEARVALKAGQLKVIIPSPKRPVKLFSGSNTLHLVSTTKTEVIPPLIENRKSWSTCKPFFTGMNYCTTGAYSNASSTESASYYPLTGDTRYELELKPTGEVEQYSASATYELLKEDKSLVDTLKFLVQAEGVQQSEATAMFKYNRRSRTLSSEVLIPGFDVNFGTILRVNDESSKDKNTYKLILDIQNKKITEVSVVGHVSYDKKGDGKVKGVVSIPRLQAEARSEVHTHWSPTKLLFQMDSSATAYGSTISKRVAWRYDNEKIEFDWNTGTNVDTKKVASNFPVDLSRYPRMVHEYANGLLDHRVPQTDMTFRHMGSKLIVDHLNGLSELNLPKVGLPDFHIPDNLFLKTDGRVKYTLNKNRIEIDIPLPLGGKSSKDLKVPESVRTPALNFKSVGFHLPSQEVQIPTFTIPKTHQLQVPLLGILDLSTNVYSNLYNWSVSYTGGNTSRDHFSLQAQYRMKADSVVDLFSYSVQGSGETTYDSKSTFTLSCDGSLHHKFLDSKFKVSHVEKFGNNPVSKGLLTFETSSALGPQMSATVQLDSKKKQHLYVKDIKVDGQFRVFSLYAQGEYGLSYERDSMTGQMSGESNMKFNSTYFQGTNQIVGMYQDGMLSVTSTSDLQDGIFKNTASLKYENYELTLKSDSSGQYENFAASNKLDMTFSKQSALLRSEHQANYKSLRLVTLLSGSLTSQGVELNADILGTDKINTGAHKSTLKIAQDGVSTSATTNLKYSPLLLENELNAELGLSGASMKLSTSGRFKEHHAKFSLDGRAALTEVSLGSIYQAMILGADSKNVFNFKLSREGLKLSNDMMGSYAEMKLDHTHSLRISGLSLDFFSKMDNIYSGDKFYKQNFNLQLQPYSFGITLSNDLKYDALVLTNNGRLRLEPLKLNVGGNFKGTYQNNELKHIYTISYTDLVVASYRADTVATVQGVEFSHRLNADIEGLASSVDVTTSYSSDPLHFNNVFRFVLAPFTLGVDTHTSGDGKMSLWGEHTGQMYSKFLLKAEPLALTFSHDYKGSTSHNLLYKNSVSTALEHTLSALLTPAEQTSSWKFKTSLNDKVYSQEFEAYNTKDKIGIELSGRADLSGLYSPIKVPFFYSEPVNVLNSLEINDAFDEPREFTIDAVVKYDKNQDVHTISLPFFQSLPDYLERNRRGIISLLEAMKGELQRLSVDQFVRKYRVALSRLPQQIHDYLNASDWERQVAGAKEKLTSFMENYRITDNDVLIALDSAKINLNEKLSQLETYAIQFDQYIRDNYDAQDLKRTIAQIIDRIIEKLKMLDEQYHIRVNLAKSIHNLYLFVENVDLNQISSSGASWIQNVDTKYQIRIQIQEKLQHLRTQIHNIDIQQLAAELKQQIEALDVPMHLDQLRTAILFQRISVIIERVKYFVMNLIEDFKVTEKINTFRVIVRELIEKYEVDRQIQVLMDKSIELAHRYSLSEPLQKLSNVLQQIEIKDYYDKLVGFIDDTVEWIKAVSFKNIIEELNRLIDMSVKKLKAFDYHQFVDKTNSKIREMTQRINAEIQALELPQKTEALKLWVEDFKTTVSNSLEKLKDTKVTVVVDWLQDGLAQIKAQFQDALEDVRDRIYQMDIQGELERCLSLVSQVYSTVVTYISDWWTLTAKNITDFAEQYSTQKWAESVKALVEQGFIVPEIQTFLGTMPAFEVSLHALQEANFQTPDFIVPLTDLRIPSIWINFKMLKNVKIPLRFSTPEFTLLNTFRVRSFTIDLLEIKAKIIRTIDQMLSSELQWPLPEVYLRDLEMVNISLARLSLPDFHVPEITIPEFTIPNVNLKDLQVPDLHIPEFQLPHLSCTTEIPAFGKLHSVLKIQSPLFILDASANIQNITTSENKAEIVASVTARGESKFEALNFDFQAQAQFLELNANPLVLKESVNFSSKHVRMEHEGKILVSGKALEGKSDTVARLHTEKNTVEFNNGIVVKINNQFTLDSQTKYFHKLSVPRLDFSSKASLNNEIKTLLEAGHMAWTSSGTGSWNWACPNFSDEGIHSSKISFIVDGPIASFGLSNNINGKHLRVVQKLTSESGFLNYSRFEVESKVESQHVGSSILTAEGRALLGDAKAEMTGEHNANLNGKVIGTLKNSLFFSAQPFEITASTNNEGNLKVSFPLKLTGKIDFLNNYALFLSPHAQQASWQLSTRFNQYKYNQNFSAINNEHNMEASIVMNGDANLDFLNIPLTIPEINLPYTRFTTPLLKDFSIWEETGLKEFLKTTKQSFDLSIKAQYKKNRDKHSVVIPLKMFYEFMLNNVNSWDRKFEKVRDNALHFLTASYNETKIKFDKYKTENSLNQPSRTFQNRGHTIPVLNIEVSPFAVETLASSHVIPKAIRTPSVTIPGPNIIVPSYRLVLPSLQLPVFHIPRTLFKFSLPDFKKLSTIDNIYIPAMGNFTYDFSFKSSVITLNTNAGLYNQSDLVARFLSSSSFVTDALQYKLEGTSRLMRKKVLKLATAVSLTNKFLKGSHDSTISLTKKNMEASVKTTANLHAPIFTMNFKQELNGNTKSKPTVSSSIELNYDFNSSKLHSAAKGGVDHKFSLESLTSYLSIESFTKGNIKGSFLSQEYSGSVANEANVYLNSKGTRSSVRLQGASNFAGIWNFEVGENFAGEATLRRIYGTWEHNMINHLQVFSYFDTKGKQTCRATLELSPWTMSTLLQVHVSQPSPLFDLHHFDQEVILKASTKNQKVSWKSEVQVESQVLQHNAHFSNDQEEVRLDIAGSLEGQLWDLENFFLPAFGKSLRELLQIDGKRQYLQASTSLHYTKNPNGYLLSLPVQELTDRFIIPGLKLNDFSGIKIYKKLSTSPFALNLTMLPKVKFPGVDLLTQYSKPEGSSVPTFETTIPEIQLTVSQFTLPKSFPVGNTVFDLNKLTNLIADVDLPSITLPEQTIEIPSLEFSVPAGIFIPFFGELTAHVGMASPLYNVTWSTGWKNKADHVETFLDSTCSSTLQFLEYALKVVGTHRIENDKFIYKIKGTLQHCDFNVKYNEDGIFEGLWDLEGEAHLDITSPALTDFHLHYKEDKTSVSASAASPAIGTVSLDASTDDQSVRLNVYFRPQSPPDNKLSIFKMEWRDKESDGETYIKINWEEEAAFRLLDSLKSNVPKASEAVYDYVKKYHLGHASSELRKSLQNDAEHAIRMVDEMNVNAQRVTRDTYQSLYKKMLAQESQSIPEKLKKMVLGSLVRITQKYHMAVTWLMDSVIHFLKFNRVQFPGNAGTYTVDELYTIAMRETKKLLSQLFNGLGHLFSYVQDQVEKSRVINDITFKCPFSPTPCKLKDVLLIFREDLNILSNLGQQDINFTTILSDFQSFLERLLDIIEEKIECLKNNESTCVPDHINMFFKTHIPFAFKSLRENIYSVFSEFNDFVQSILQEGSYKLQQVHQYMKAFREEYFDPSVVGWTVKYYEIEEKMVDLIKTLLAPLRDFYSEYSVTAADFASKMSTQVEQFVSRDIREYLSMLADINGKGREKVAELSIVVKERIKSWSTAVAEITSDYLRQLHSKLQDFSDQLSGYYEKFVAESTRLIDLSIQNYHMFLRYIAELLKKLQVATANNGLLKRGDFEAAVKLGIACLYNEGLSVSDEAYAEVNGLKASRFFSMDERLNMGSDPFIWLSICPPCFRKLRDFAGKGCWEAQPALAKDCAGGSQLGLEGKAFSESVCQLFQASQAVNKQQIFSVQKGLSDTVRYILIGWLVEVAPMKDFTSLCLHLTVECVGRYLQRKLVPRYKLQLLGIACMVICTWFISKEILTIREAVRLTDNTYKYKDLVRVKREIISALEGKIRIPTVVDYKEVLLTLVPVTPRTQYLCSFLCELTLSVYTPAHLASAALLLARLMHGQTQP.

Positions 1-27 (MGPQRPALRAPLLLLFLLLFLDTSVWA) are cleaved as a signal peptide. The interval 29–113 (DATRFKHLRK…KNSEEFASAM (85 aa)) is heparin-binding. In terms of domain architecture, Vitellogenin spans 33-660 (FKHLRKYVYS…PSSYLPKESM (628 aa)). Cys65 and Cys84 are disulfide-bonded. A glycan (N-linked (GlcNAc...) asparagine) is linked at Asn172. Disulfide bonds link Cys173–Cys199, Cys232–Cys248, Cys372–Cys377, and Cys466–Cys501. Positions 219–293 (VRPLSTLISS…RFFRGGINQV (75 aa)) are heparin-binding. The interval 890–947 (NTNFFHESGLEARVALKAGQLKVIIPSPKRPVKLFSGSNTLHLVSTTKTEVIPPLIEN) is heparin-binding. A disulfide bond links Cys954 and Cys964. 4 N-linked (GlcNAc...) asparagine glycosylation sites follow: Asn971, Asn1336, Asn1345, and Asn1491. Residue Lys1973 is modified to N6-acetyllysine. Ser2006 carries the post-translational modification Phosphoserine. Positions 2010 to 2145 (NDAFDEPREF…EKLSQLETYA (136 aa)) are heparin-binding. 8 N-linked (GlcNAc...) asparagine glycosylation sites follow: Asn2094, Asn2522, Asn2662, Asn2741, Asn2791, Asn2897, Asn2944, and Asn3063. The tract at residues 3123–3198 (FLKTTKQSFD…KIKFDKYKTE (76 aa)) is heparin-binding. The interval 3136–3146 (KAQYKKNRDKH) is basic (possible receptor binding region). N-linked (GlcNAc...) asparagine glycosylation is found at Asn3186, Asn3299, and Asn3321. The interval 3336–3356 (VTDALQYKLEGTSRLMRKKVL) is LDL receptor binding. The segment at 3346–3479 (GTSRLMRKKV…QEYSGSVANE (134 aa)) is heparin-binding. The interval 3349 to 3357 (RLMRKKVLK) is basic (possible receptor binding region). Asn3428, Asn3715, and Asn3828 each carry an N-linked (GlcNAc...) asparagine glycan. The residue at position 3981 (Ser3981) is a Phosphoserine. At Thr3985 the chain carries Phosphothreonine. Asn4203 and Asn4232 each carry an N-linked (GlcNAc...) asparagine glycan.

Interacts with PCSK9. Interacts with MTTP. Interacts with AUP1. Interacts with CIDEB. Palmitoylated; structural requirement for proper assembly of the hydrophobic core of the lipoprotein particle. Detected in intestine and liver (at protein level).

It is found in the cytoplasm. The protein resides in the secreted. It localises to the lipid droplet. In terms of biological role, apolipoprotein B is a major protein constituent of chylomicrons (apo B-48), LDL (apo B-100) and VLDL (apo B-100). Apo B-100 functions as a recognition signal for the cellular binding and internalization of LDL particles by the apoB/E receptor. The protein is Apolipoprotein B-100 (Apob) of Rattus norvegicus (Rat).